The sequence spans 54 residues: UPF0181 protein APJL_0874 (54 aa).

This sequence belongs to the UPF0181 family.

This is UPF0181 protein APJL_0874 from Actinobacillus pleuropneumoniae serotype 3 (strain JL03).